A 142-amino-acid chain; its full sequence is Hemoglobin subunit beta-2 (142 aa).

A Globin domain is found at 2 to 142 (SLTDEEKHLI…VTEALSCQYH (141 aa)). The heme b site is built by His59 and His88.

The protein belongs to the globin family. In terms of assembly, heterotetramer of two alpha chains and two beta chains. As to expression, red blood cells.

Functionally, involved in oxygen transport from the lung to the various peripheral tissues. In Torpedo marmorata (Marbled electric ray), this protein is Hemoglobin subunit beta-2 (HBB2).